The sequence spans 231 residues: Uracil-DNA glycosylase (231 aa).

D74 functions as the Proton acceptor in the catalytic mechanism.

Belongs to the uracil-DNA glycosylase (UDG) superfamily. UNG family.

The protein resides in the cytoplasm. The enzyme catalyses Hydrolyzes single-stranded DNA or mismatched double-stranded DNA and polynucleotides, releasing free uracil.. Excises uracil residues from the DNA which can arise as a result of misincorporation of dUMP residues by DNA polymerase or due to deamination of cytosine. In Campylobacter jejuni subsp. doylei (strain ATCC BAA-1458 / RM4099 / 269.97), this protein is Uracil-DNA glycosylase.